Reading from the N-terminus, the 628-residue chain is Phomenoic acid biosynthesis cluster MFS-type transporter (628 aa).

14 helical membrane-spanning segments follow: residues 102 to 122 (IHGF…FLYA), 150 to 170 (VGFV…YGIL), 174 to 194 (WLYI…GAAP), 204 to 224 (VFAG…LSIN), 232 to 252 (AYLS…PVIG), 262 to 282 (WAFY…FFLL), 302 to 322 (FVGA…INFG), 329 to 349 (NSGT…AFAV), 375 to 395 (MLLF…IYFI), 407 to 427 (ALDS…TILV), 435 to 455 (FGYY…ANVF), 488 to 508 (GFEA…YAVI), 524 to 544 (IMIA…AVFI), and 595 to 615 (AKAF…SLGF).

Belongs to the major facilitator superfamily. TCR/Tet family.

Its subcellular location is the cell membrane. MFS-type transporter; part of the gene cluster that mediates the biosynthesis of phomenoic acid, a long chain aliphatic carboxylic acid that does not appear to be essential for pathogenicity but may play a role in allowing to outcompete other fungi in the environmental niche via its antifungal properties. Is probably involved in the efflux of phomenoic acid. The chain is Phomenoic acid biosynthesis cluster MFS-type transporter from Leptosphaeria maculans (strain JN3 / isolate v23.1.3 / race Av1-4-5-6-7-8) (Blackleg fungus).